The sequence spans 656 residues: Choline transporter-like protein 3 (656 aa).

The helical transmembrane segment at 37 to 57 (WLVLFFLFWTGLVFIMGYSVV) threads the bilayer. N-linked (GlcNAc...) asparagine glycans are attached at residues Asn141 and Asn154. 5 helical membrane passes run 216-236 (DTIL…LFAF), 242-262 (LLIH…CGVL), 288-308 (LAFA…IFTL), 337-357 (LWTC…LLSL), and 381-401 (YMWW…LACQ). Residues Asn506 and Asn524 are each glycosylated (N-linked (GlcNAc...) asparagine). The chain crosses the membrane as a helical span at residues 537–557 (FVIFLGKVLVVCFSIFGGLMA). Asn559 carries an N-linked (GlcNAc...) asparagine glycan. Residues 566 to 586 (VWAIPLLLVAFFACVVAHSFL) traverse the membrane as a helical segment. The segment at 634 to 656 (AKSQGQKDALPNEEGTELQPIVR) is disordered.

The protein belongs to the CTL (choline transporter-like) family.

The protein resides in the membrane. This chain is Choline transporter-like protein 3 (Slc44a3), found in Mus musculus (Mouse).